The primary structure comprises 425 residues: Orexin/Hypocretin receptor type 1 (425 aa).

Residues 1–25 (MEPSATPGPQMGVPTEGRERSPEPP) are disordered. At 1 to 46 (MEPSATPGPQMGVPTEGRERSPEPPDYEDEFLRYLWRDYLYPKQYE) the chain is on the extracellular side. The tract at residues 26–41 (DYEDEFLRYLWRDYLY) is required for response to orexin-A. The chain crosses the membrane as a helical span at residues 47–67 (WVLIAAYVAVFFVALVGNTLV). The Cytoplasmic segment spans residues 68–82 (CLAVWRNHHMRTVTN). A helical transmembrane segment spans residues 83 to 105 (YFIVNLSLADVLVTAICLPASLL). Topologically, residues 106–119 (VDITESWLFGHALC) are extracellular. Cysteines 119 and 202 form a disulfide. A helical transmembrane segment spans residues 120-140 (KVIPYLQAVSVSVAVLTLSFI). Residues 141–160 (ALDRWYAICHPLLFKSTARR) are Cytoplasmic-facing. The chain crosses the membrane as a helical span at residues 161 to 182 (ARGSILGIWAVSLAVMVPQAAV). Residues 183–213 (MECSSVLPELANRTRLFSVCDERWADDLYPK) are Extracellular-facing. An N-linked (GlcNAc...) asparagine glycan is attached at N194. A helical membrane pass occupies residues 214–235 (IYHSCFFIVTYLAPLGLMAMAY). Residues 236–298 (FQIFRKLWGR…QMRARRKTAK (63 aa)) are Cytoplasmic-facing. Residues 299–321 (MLMVVLLVFALCYLPISVLNVLK) traverse the membrane as a helical segment. The Extracellular portion of the chain corresponds to 322-336 (RVFGMFRQASDREAV). The chain crosses the membrane as a helical span at residues 337-360 (YACFTFSHWLVYANSAANPIIYNF). Over 361 to 425 (LSGKFREQFK…LLTSVTTVLP (65 aa)) the chain is Cytoplasmic.

The protein belongs to the G-protein coupled receptor 1 family.

It is found in the cell membrane. Moderately selective excitatory receptor for orexin-A and, with a lower affinity, for orexin-B neuropeptide. Triggers an increase in cytoplasmic Ca(2+) levels in response to orexin-A binding. This Bos taurus (Bovine) protein is Orexin/Hypocretin receptor type 1.